The chain runs to 142 residues: Large ribosomal subunit protein bL19 (142 aa).

The protein belongs to the bacterial ribosomal protein bL19 family.

In terms of biological role, this protein is located at the 30S-50S ribosomal subunit interface and may play a role in the structure and function of the aminoacyl-tRNA binding site. The polypeptide is Large ribosomal subunit protein bL19 (Rickettsia bellii (strain OSU 85-389)).